We begin with the raw amino-acid sequence, 231 residues long: Large ribosomal subunit protein uL1 (231 aa).

It belongs to the universal ribosomal protein uL1 family. Part of the 50S ribosomal subunit.

Functionally, binds directly to 23S rRNA. The L1 stalk is quite mobile in the ribosome, and is involved in E site tRNA release. In terms of biological role, protein L1 is also a translational repressor protein, it controls the translation of the L11 operon by binding to its mRNA. This is Large ribosomal subunit protein uL1 from Buchnera aphidicola subsp. Acyrthosiphon pisum (strain APS) (Acyrthosiphon pisum symbiotic bacterium).